The chain runs to 170 residues: Urease accessory protein UreE (170 aa).

Belongs to the UreE family.

It is found in the cytoplasm. Functionally, involved in urease metallocenter assembly. Binds nickel. Probably functions as a nickel donor during metallocenter assembly. This chain is Urease accessory protein UreE, found in Helicobacter acinonychis (strain Sheeba).